Consider the following 228-residue polypeptide: MTVVVVQFGGSNCDRDAVRALQHIGIDATRVWHEDGLNDSVENLDGIILPGGFSYGDYLRAGAMAAHSPIVNDIQAAAERGIPVLGVCNGAQVGCESGLTPGAFTTNDRARFQCETVHLRVENATTPWTEAYEAGTVIEIPIAHGEGRFEITENEYEMLKNDNQILFRYCDASGNITDDANPNGSRGNVAGITGNYDTVAVLMPHPERATLPELGRSTDGKGILQAFG.

A Glutamine amidotransferase type-1 domain is found at 2-228 (TVVVVQFGGS…DGKGILQAFG (227 aa)). The Nucleophile role is filled by Cys-88. Catalysis depends on residues His-205 and Glu-207.

As to quaternary structure, part of the FGAM synthase complex composed of 1 PurL, 1 PurQ and 2 PurS subunits.

Its subcellular location is the cytoplasm. The catalysed reaction is N(2)-formyl-N(1)-(5-phospho-beta-D-ribosyl)glycinamide + L-glutamine + ATP + H2O = 2-formamido-N(1)-(5-O-phospho-beta-D-ribosyl)acetamidine + L-glutamate + ADP + phosphate + H(+). It catalyses the reaction L-glutamine + H2O = L-glutamate + NH4(+). Its pathway is purine metabolism; IMP biosynthesis via de novo pathway; 5-amino-1-(5-phospho-D-ribosyl)imidazole from N(2)-formyl-N(1)-(5-phospho-D-ribosyl)glycinamide: step 1/2. Functionally, part of the phosphoribosylformylglycinamidine synthase complex involved in the purines biosynthetic pathway. Catalyzes the ATP-dependent conversion of formylglycinamide ribonucleotide (FGAR) and glutamine to yield formylglycinamidine ribonucleotide (FGAM) and glutamate. The FGAM synthase complex is composed of three subunits. PurQ produces an ammonia molecule by converting glutamine to glutamate. PurL transfers the ammonia molecule to FGAR to form FGAM in an ATP-dependent manner. PurS interacts with PurQ and PurL and is thought to assist in the transfer of the ammonia molecule from PurQ to PurL. This is Phosphoribosylformylglycinamidine synthase subunit PurQ from Haloquadratum walsbyi (strain DSM 16790 / HBSQ001).